The chain runs to 258 residues: uncharacterized protein (258 aa).

This is an uncharacterized protein from Mycobacterium tuberculosis (strain CDC 1551 / Oshkosh).